Reading from the N-terminus, the 152-residue chain is Protein Smg homolog (152 aa).

Belongs to the Smg family.

The sequence is that of Protein Smg homolog from Chromobacterium violaceum (strain ATCC 12472 / DSM 30191 / JCM 1249 / CCUG 213 / NBRC 12614 / NCIMB 9131 / NCTC 9757 / MK).